The chain runs to 81 residues: Photosystem I iron-sulfur center (81 aa).

4Fe-4S ferredoxin-type domains are found at residues 2–31 (SHTV…MVPW) and 37–68 (GQIA…VRVY). 8 residues coordinate [4Fe-4S] cluster: C11, C14, C17, C21, C48, C51, C54, and C58.

As to quaternary structure, the eukaryotic PSI reaction center is composed of at least 11 subunits. Requires [4Fe-4S] cluster as cofactor.

Its subcellular location is the plastid. It is found in the chloroplast thylakoid membrane. It carries out the reaction reduced [plastocyanin] + hnu + oxidized [2Fe-2S]-[ferredoxin] = oxidized [plastocyanin] + reduced [2Fe-2S]-[ferredoxin]. Apoprotein for the two 4Fe-4S centers FA and FB of photosystem I (PSI); essential for photochemical activity. FB is the terminal electron acceptor of PSI, donating electrons to ferredoxin. The C-terminus interacts with PsaA/B/D and helps assemble the protein into the PSI complex. Required for binding of PsaD and PsaE to PSI. PSI is a plastocyanin/cytochrome c6-ferredoxin oxidoreductase, converting photonic excitation into a charge separation, which transfers an electron from the donor P700 chlorophyll pair to the spectroscopically characterized acceptors A0, A1, FX, FA and FB in turn. The sequence is that of Photosystem I iron-sulfur center from Phaeodactylum tricornutum (strain CCAP 1055/1).